Consider the following 228-residue polypeptide: 2,3-bisphosphoglycerate-dependent phosphoglycerate mutase (228 aa).

Residues 8–15, 21–22, arginine 60, 87–90, lysine 98, 114–115, and 180–181 contribute to the substrate site; these read RHGQSQWN, TG, ERHY, RR, and GN. Histidine 9 functions as the Tele-phosphohistidine intermediate in the catalytic mechanism. Glutamate 87 functions as the Proton donor/acceptor in the catalytic mechanism.

This sequence belongs to the phosphoglycerate mutase family. BPG-dependent PGAM subfamily. As to quaternary structure, homodimer.

It carries out the reaction (2R)-2-phosphoglycerate = (2R)-3-phosphoglycerate. The protein operates within carbohydrate degradation; glycolysis; pyruvate from D-glyceraldehyde 3-phosphate: step 3/5. In terms of biological role, catalyzes the interconversion of 2-phosphoglycerate and 3-phosphoglycerate. This chain is 2,3-bisphosphoglycerate-dependent phosphoglycerate mutase, found in Erythrobacter litoralis (strain HTCC2594).